The chain runs to 370 residues: Biotin synthase (370 aa).

The 228-residue stretch at 56–283 folds into the Radical SAM core domain; it reads NAVQVSTLLS…KSHVRLSAGR (228 aa). [4Fe-4S] cluster-binding residues include Cys71, Cys75, and Cys78. Cys115, Cys146, Cys206, and Arg278 together coordinate [2Fe-2S] cluster. The span at 327-344 shows a compositional bias: basic and acidic residues; the sequence is GLHPEPSDPHADDAHRDD. Residues 327–346 are disordered; sequence GLHPEPSDPHADDAHRDDEQ.

This sequence belongs to the radical SAM superfamily. Biotin synthase family. Homodimer. [4Fe-4S] cluster is required as a cofactor. The cofactor is [2Fe-2S] cluster.

The catalysed reaction is (4R,5S)-dethiobiotin + (sulfur carrier)-SH + 2 reduced [2Fe-2S]-[ferredoxin] + 2 S-adenosyl-L-methionine = (sulfur carrier)-H + biotin + 2 5'-deoxyadenosine + 2 L-methionine + 2 oxidized [2Fe-2S]-[ferredoxin]. It participates in cofactor biosynthesis; biotin biosynthesis; biotin from 7,8-diaminononanoate: step 2/2. Functionally, catalyzes the conversion of dethiobiotin (DTB) to biotin by the insertion of a sulfur atom into dethiobiotin via a radical-based mechanism. The chain is Biotin synthase from Chromohalobacter salexigens (strain ATCC BAA-138 / DSM 3043 / CIP 106854 / NCIMB 13768 / 1H11).